A 186-amino-acid chain; its full sequence is Peptidyl-tRNA hydrolase (186 aa).

Tyr14 contributes to the tRNA binding site. His19 functions as the Proton acceptor in the catalytic mechanism. TRNA is bound by residues Phe64, Asn66, and Asn112.

It belongs to the PTH family. In terms of assembly, monomer.

Its subcellular location is the cytoplasm. The catalysed reaction is an N-acyl-L-alpha-aminoacyl-tRNA + H2O = an N-acyl-L-amino acid + a tRNA + H(+). Functionally, hydrolyzes ribosome-free peptidyl-tRNAs (with 1 or more amino acids incorporated), which drop off the ribosome during protein synthesis, or as a result of ribosome stalling. Catalyzes the release of premature peptidyl moieties from peptidyl-tRNA molecules trapped in stalled 50S ribosomal subunits, and thus maintains levels of free tRNAs and 50S ribosomes. In Listeria monocytogenes serotype 4a (strain HCC23), this protein is Peptidyl-tRNA hydrolase.